The chain runs to 435 residues: Methylenetetrahydrofolate--tRNA-(uracil-5-)-methyltransferase TrmFO (435 aa).

FAD is bound at residue 9 to 14 (GAGLAG).

This sequence belongs to the MnmG family. TrmFO subfamily. Requires FAD as cofactor.

Its subcellular location is the cytoplasm. The catalysed reaction is uridine(54) in tRNA + (6R)-5,10-methylene-5,6,7,8-tetrahydrofolate + NADH + H(+) = 5-methyluridine(54) in tRNA + (6S)-5,6,7,8-tetrahydrofolate + NAD(+). It carries out the reaction uridine(54) in tRNA + (6R)-5,10-methylene-5,6,7,8-tetrahydrofolate + NADPH + H(+) = 5-methyluridine(54) in tRNA + (6S)-5,6,7,8-tetrahydrofolate + NADP(+). Its function is as follows. Catalyzes the folate-dependent formation of 5-methyl-uridine at position 54 (M-5-U54) in all tRNAs. This is Methylenetetrahydrofolate--tRNA-(uracil-5-)-methyltransferase TrmFO from Staphylococcus epidermidis (strain ATCC 35984 / DSM 28319 / BCRC 17069 / CCUG 31568 / BM 3577 / RP62A).